Consider the following 785-residue polypeptide: Probable serine protease Ga0098714_109514 (785 aa).

2 stretches are compositionally biased toward basic and acidic residues: residues L470–R481 and D491–D501. Disordered stretches follow at residues L470–D503 and D608–S629.

The protein belongs to the peptidase S1 family.

Its function is as follows. Probably a dedicated protease for substrate gasdermin bGSDM; cleaves the bGSDM precursor, releasing the pore-forming moiety, which integrates into the membrane and triggers cell death. Involved in defense against bacteriophages. Expression of gasdermin bGSDM and this neighboring protease is toxic in E.coli on solid medium. The chain is Probable serine protease Ga0098714_109514 from Bradyrhizobium tropiciagri.